The chain runs to 148 residues: Macrodomain Ter protein (148 aa).

This sequence belongs to the MatP family. Homodimer.

It is found in the cytoplasm. In terms of biological role, required for spatial organization of the terminus region of the chromosome (Ter macrodomain) during the cell cycle. Prevents early segregation of duplicated Ter macrodomains during cell division. Binds specifically to matS, which is a 13 bp signature motif repeated within the Ter macrodomain. The protein is Macrodomain Ter protein of Haemophilus influenzae (strain ATCC 51907 / DSM 11121 / KW20 / Rd).